A 375-amino-acid polypeptide reads, in one-letter code: Circadian-associated transcriptional repressor (375 aa).

Over residues 1–32 (MDSPSSVSSYSSSSLSPSFSTSSVNSDFSFPS) the composition is skewed to low complexity. Disordered regions lie at residues 1–102 (MDSP…LNTQ), 192–218 (KSSS…AASP), and 351–375 (DREM…DPQP). A compositionally biased stretch (basic and acidic residues) spans 33 to 46 (DNEREGKGTHELRP).

In terms of assembly, interacts with BMAL1, PER2, CRY2, BHLHE41, HDAC1 NR3C1.

The protein resides in the nucleus. Its subcellular location is the PML body. In terms of biological role, transcriptional repressor which forms a negative regulatory component of the circadian clock and acts independently of the circadian transcriptional repressors: CRY1, CRY2 and BHLHE41. In a histone deacetylase-dependent manner represses the transcriptional activator activity of the CLOCK-BMAL1 heterodimer. Abrogates the interaction of BMAL1 with the transcriptional coactivator CREBBP and can repress the histone acetyl-transferase activity of the CLOCK-BMAL1 heterodimer, reducing histone acetylation of its target genes. Rhythmically binds the E-box elements (5'-CACGTG-3') on circadian gene promoters and its occupancy shows circadian oscillation antiphasic to BMAL1. Interacts with the glucocorticoid receptor (NR3C1) and contributes to the repressive function in the glucocorticoid response. This is Circadian-associated transcriptional repressor (Ciart) from Mus musculus (Mouse).